A 750-amino-acid polypeptide reads, in one-letter code: Photosystem I P700 chlorophyll a apoprotein A1 (750 aa).

8 consecutive transmembrane segments (helical) span residues 70 to 93 (VFSAHFGQLSIIFLWLSGMYFHGA), 156 to 179 (LYCTAIGALVFAALMLFAGWFHYH), 195 to 219 (LNHHLAGLLGLGSLSWAGHQIHVSL), 291 to 309 (IAHHHLAIAILFLIAGHMY), 346 to 369 (WHAQLALNLAMLGSLTIVVAHHMY), 385 to 411 (LSLFTHHMWIGGFLIVGAAAHAAIFMV), 433 to 455 (AIISHLNWACIFLGFHSFGLYIH), and 531 to 549 (FLVHHIHAFTIHVTVLILL). [4Fe-4S] cluster contacts are provided by Cys573 and Cys582. 2 helical membrane-spanning segments follow: residues 589–610 (HVFLGLFWMYNSISVVIFHFSW) and 664–686 (LSAYGLFFLGAHFVWAFSLMFLF). His675 is a binding site for chlorophyll a'. The chlorophyll a site is built by Met683 and Tyr691. Trp692 is a phylloquinone binding site. Residues 724–744 (AVGVTHYLLGGIATTWAFFLA) traverse the membrane as a helical segment.

This sequence belongs to the PsaA/PsaB family. The PsaA/B heterodimer binds the P700 chlorophyll special pair and subsequent electron acceptors. PSI consists of a core antenna complex that captures photons, and an electron transfer chain that converts photonic excitation into a charge separation. The eukaryotic PSI reaction center is composed of at least 11 subunits. Requires P700 is a chlorophyll a/chlorophyll a' dimer, A0 is one or more chlorophyll a, A1 is one or both phylloquinones and FX is a shared 4Fe-4S iron-sulfur center. as cofactor.

Its subcellular location is the plastid. It localises to the chloroplast thylakoid membrane. It catalyses the reaction reduced [plastocyanin] + hnu + oxidized [2Fe-2S]-[ferredoxin] = oxidized [plastocyanin] + reduced [2Fe-2S]-[ferredoxin]. In terms of biological role, psaA and PsaB bind P700, the primary electron donor of photosystem I (PSI), as well as the electron acceptors A0, A1 and FX. PSI is a plastocyanin-ferredoxin oxidoreductase, converting photonic excitation into a charge separation, which transfers an electron from the donor P700 chlorophyll pair to the spectroscopically characterized acceptors A0, A1, FX, FA and FB in turn. Oxidized P700 is reduced on the lumenal side of the thylakoid membrane by plastocyanin. This Acorus calamus (Sweet flag) protein is Photosystem I P700 chlorophyll a apoprotein A1.